The chain runs to 3797 residues: MEDEERQRKLAAGKAKLARFRQRKAQYDGDIPKKQKKKRTSSSKHDSSLHTDQQSGELCSESSQRVDLAGNPDCSGPERKHGQVFSAEPESEISTTADECSSEINGCNSVMKPRKPTDPLREEEFSLDDSSSEQGAQSSQTCLQMVEKELAEKQHDIEELTQELEEMRASFGTEGLKQLQEFEAAIKQRDGIITQLTANLQQARREKDDTMVEFLELTEQSQKLQIQFQHLQANETLQNSTLSRTATDLLQAKRQIFTQQQQLQDYQKKEEDLQAQISFLQEKLRAFEMEKDRKIENLNAKEIQEKQALIDELNTRVVEEEKKTVELKNKVTTADELLGGLHEQLTQRNQEIQSLKLELGNSQQNERKCSEEIKELMRTVEELQKRNLKDSWLETSAVRRVEQETQRKLSHLQAELDEMYGKQIVQMKQELINQHMSQIEELKSQHKREMENTLKSDTNAAISKEQVNLMNAAINELNVRLQETHAQKEELKGELGVVLGEKSALQSQSNDLLEEVRFLREQVQKARQTIAEQENRLSEARKSLSTVEDLKAEIVAASESRKELELKHEAEITNYKIKLEMLEKEKNAVLDRMAESQEAELERLRTQPLFSHEEELSKLKEDLEVEHRINIEKLKDNLGIHYKQQIDGLQNEMNRKMESMQCETDNLITQQNQLILENSKLRDLQECLVNSKSEEMNLQINELQKEIEILKQEEKEKGTLEQEVQELQLKTEQLEKQLKEKEDDLQEKCAQLDAENNILKEEKRVLEDKLKMYSPSEQEERSIAVDPSTSKLADSRWQKEVAMLRKETEDLQQQCLYLNEEIEKQRNTFAFAEKNFEVNYQELQREYTCLLKIRDDLEATQTKQALEYESKLRALEEELLSKRGNPXAPKGKSSGIFPSETLEIGEVVEKDTTELMEKLEVTKREKLELSEKVSGLSEQLKQTHCTINSLSAEXRALKQEKEQLLLRCGELELLANPSGTENAAVCPVQMSSYQAGLVMGKVGDSGGSISKISKDLAEESKPMIEDKIPFKESGREQLLLPTRAQEPSHATVEPCESEKLQQELHALKAEQDDLRLQMEAQRICLFVVYSTHADQVRAHMEKEREEALCSLKDELISAQQKKIDELHKMHQCQLQNVKIQETGDEPLQVLIERLQKAVSEKCFHISKTLNNVFDECYTPLKCEMNIEEKENSGVYTSQNQSPELQEYRYEVQDFQESMQVLLGKVTEECRKLSGLQTRLGKIHEQQTDGVALEFAEQNAAEEEAGLLSGCSQSALQSTDVSLESKVSSLPASEKNRECERQVQELQSPVAAGQLQLTETEASHRAEIECLQQRLEAASEAPVQPSLSIDSVVFKGSGAQKPVYCGSCLREYVDGTAKFSDRFEVRQETNMVNLMEKQYQERLEEEIAKVIVSMSIAFAQQTELSRLSEGKENTIQSEQAHTLCSQNKHQLNDITSQSQVGLQTFEATDKBFKEEFKPLSKELGEYRKAVPLSSHDDLDDILKSEEHGLAISEEIFSKDETFIVRKSMHDEVLVSSMDTSRQLILNEQLEDMRQELVRQYEEHQQATEMLRQAHMQQMERQREDQEQLQEEIKRLNEQLTQKSSIDTEHVVSERERVLLEELEALKQLPLAGRKELCCELRHSSTQTQDGHDDQEVEEQTLKDKTLERSPEDALLDRNLSNERYALKKANNRLLKILLEVVKTTSAAEETIGRHVLGILDRSSKGQTASSLLWRSEADASATTCAPEDCARAMDESIPSYPGTAIATHDSIWSKVTEEGAELSQRLVRSGFAGPVIDPENEELMLNISSRLQAAVEKLLEAISETNTQLEHAKVTQTELMRESFRQKQEATESLHCLEELRERLQEESRAREQLAEELNKAESVIDGYSDEKTLFERQIQEKTDIIEHLEQEVLCMNNRLQELESDQRRVEEERQLLCRQREAMRAEAGPVEQQFLQETEKLMKEKLEVQCQAEKVRGDLQKQVKALEIDVEEQVSRFIELEQEKNAELTDLRQQSQALEKQLEKMRKFLDEQAIDREHERDVFQQEIQKLEHQLKAAPRIQPVSEHQAREVEQLTNHLKEKTDRCSELLLSKEQLQRDIQERNEEIEKLECRVRELEQALLASAEPFPKVEDQKRSGAVAADPELSLEVQLQAERDATDRKQKEITNLEEQLEQFREELENKNDEVQELLMQLEIQRKESTTRLQELQQENRLFKDEIEKLGFAMKESDSVSTRDQPMLFGKFAQLIQEKEIEIDRLNEQFIKLQQQLKLTTDNKVIEEQKEQIQDLETQIERLMSEREHEKKQREEEVEQLTGVVEKLQQEVVSTEQQREGARTLPEDEESFKHQLDKVTAEKLVLEQQVETTNQVMTHMNNVLKEINFKMDQITQSLCNLNKECASNEELPSLPKESVHMTVHELGSDNLQPEDAPAQDVTKPLEKQTSLTRLQESPEASRTQEIESLASSVGAKDVELTQCREQTETIQEQAQSETDRLQKKLTDLQRSLEKFAAALVSQVQMEAAQEYVPFHQEKQPVSSAPGSTDIQNANGLTGASTESLIPTVTLRLAEVESRVAEVHSGTMSEKLVGIVGGNASETEKRVIELQKLLEEAEERPEEGGEQSSRDGEVRESYMTSLQKDLGQVKDPLTEAKEKLSYSLEKEKRTGEQESREAPIPEPPSVEVGGCSGLTERTDKVSSSGNQTLQILLRDAAIQTDLQSESSQEEVRDTINQLTKKMEHIQELHAAEILDMESRHILETESLKKEHYVAIQLLTKECETLKEMTQCLRCKEGSSIPELADSVAYQSREVYSSDSESDWGQSQGFDTAIEGREEGETSADLFPKKIKGLVKAVHSEGMQVLSLSSPLCDDGEDRSIQQLSESWLKERQAYLNTISSLKDLISKMQVRRETEVYDRCHLSDWRGELLLACQRVFIKERSVLLATFQTELTSLSTRDVDGLLNSLEQRIQEQGIEYHTAMDCLQKADRRSLLAEIEDLRAQINGGKMTLEREQGTEKSSQELLDCSMQQKQSLEMQLELSSLRDRAAELQEQLSSEKMVVAELKSELAQAKLELGTTLKAQHKRLKELEAFRSEVKEKTDEIHFLSDTLAREQKNSLELQWALEKEKARSGHHEEREKEELEDLKFSLEDQKRRNTQLNLLLEQQKQLLNESQQKIESQKMLHDAQLSEEQGRNLGLQALLESEQVRIQEMKSTLDKERELYAQLQSREDGGQPPPALPSEDLLKELQKQLEEKHSRIVELLSETEKYKLDSLQTRQQMEKDRQVHQKTLQTEQEANTQGQKKMQELQSKVEELQRQLQEKRQQVYKLDLEGKRLQGLMQEFQKQELEPEEKPGSRGLVDQNLNEPATWNFTDDRTRNWVLQQKMGEAKDRNFTKLIEINGGELDHNHDLEMIRQTLQHVASKLQHVAQKACSRLQFETAGDDAFIWIQENIDGIILQLQKLTGQPGDEHSLGPPSSSCGSLTESLMRQNTELTRLINQLTEEKNTLRSIVIKLEELNRCYWHTGASRDCCSRFSFIDPADIEAIIASEKEVWNREKLSLQKALKRAEAKVYKLKAELRNDALLRNLGPDTDHAALQKIYNKYLRASSFRKALIYQKKYLLLLLGGFQECEDVTLGVLARMGGHLALKDSKTITNHPKAFSRFRSAVRVSIAISRMKFLVRRWQQVTSTSSININRDGFGLSPGIEKTDPFYHSPGGLELYGEPRHTMYRSRFDLDYPRSLLPLQNRYPGTPGDLNSISMASSQLHQYNPDKSLTDYVTRLEALRRRLGAIQSGSTTQFHFGMRR.

The interval M1–Q140 is disordered. 2 stretches are compositionally biased toward polar residues: residues H50–R65 and E92–N108. Positions K115 to E124 are enriched in basic and acidic residues. Phosphoserine is present on S139. 2 coiled-coil regions span residues Q140–Q607 and I640–N976. S1288 is modified (phosphoserine). 3 disordered regions span residues S1643–S1668, V2323–F2343, and S2419–T2454. Basic and acidic residues-rich tracts occupy residues D1648 to S1668 and Q2328 to F2343. Residues S1808–E2377 adopt a coiled-coil conformation. Residues K2438–T2454 are compositionally biased toward polar residues. Residues D2498–L2510 are PKA-RII subunit binding domain. Disordered regions lie at residues L2604 to G2695 and M3271 to M3296. Residues E2606–G2615 are compositionally biased toward acidic residues. The segment covering P2642–P2669 has biased composition (basic and acidic residues). Residues L2975–K3325 adopt a coiled-coil conformation. Over residues Q3279–K3294 the composition is skewed to polar residues. S3732, S3755, and S3787 each carry phosphoserine.

Interacts with the regulatory region of protein kinase N (PKN), protein phosphatase 2A (PP2A), protein phosphatase 1 (PP1) and the immature non-phosphorylated form of PKC epsilon. Interacts with CIP4 and FNBP1. Interacts with chloride intracellular channel proteins CLIC1, CLIC4 and CLIC5. CSNK1D binding promotes its centrosomal subcellular location. Interacts with GM130/GOLGA2; leading to recruitment to the Golgi apparatus. Interacts with KCNQ1; targets protein kinase A (PKA) catalytic and regulatory subunits and protein phosphatase 1 (PP1), to the heterodimer KCNQ1-KCNE1. Interacts with PDE4DIP isoform 2; this interaction stabilizes both proteins. In complex with PDE4DIP isoform 2, recruits CAMSAP2 to the Golgi apparatus. Forms a pericentrosomal complex with CDK5RAP2, EB1/MAPRE1 and PDE4DIP isoform 2; within this complex, MAPRE1 binding to CDK5RAP2 may be mediated by PDE4DIP. Interacts with MAPRE1 and MAPRE3. Interacts (via C-terminus) with CAMSAP2; this interaction is much stronger in the presence of PDE4DIP isoform 2. Interacts with CAMSAP3. Interacts (via C-terminus) with the gamma-tubulin ring complex (gamma-TuRC), composed of gamma-tubulin, TUBGCP2, TUBGCP3, TUBGCP4, TUBGCP5 and TUBGCP6.

It localises to the golgi apparatus. Its subcellular location is the cytoplasm. It is found in the cytoskeleton. The protein resides in the microtubule organizing center. The protein localises to the centrosome. Its function is as follows. Scaffolding protein that assembles several protein kinases and phosphatases on the centrosome and Golgi apparatus. Required to maintain the integrity of the Golgi apparatus. Required for microtubule nucleation at the cis-side of the Golgi apparatus. Required for association of the centrosomes with the poles of the bipolar mitotic spindle during metaphase. In complex with PDE4DIP isoform 2/MMG8/SMYLE, recruits CAMSAP2 to the Golgi apparatus and tethers non-centrosomal minus-end microtubules to the Golgi, an important step for polarized cell movement. In complex with PDE4DIP isoform 2, EB1/MAPRE1 and CDK5RAP2, contributes to microtubules nucleation and extension also from the centrosome to the cell periphery. This chain is A-kinase anchor protein 9 (Akap9), found in Mus musculus (Mouse).